We begin with the raw amino-acid sequence, 490 residues long: Protein twist (490 aa).

Disordered regions lie at residues 48 to 72 (QLQH…QHAQ), 96 to 165 (PSNE…TGGS), and 244 to 264 (QQQQ…HAQM). Basic residues predominate over residues 54–68 (QHLHSHQHHQQHHQQ). 2 stretches are compositionally biased toward low complexity: residues 102 to 134 (STSS…NPSG) and 244 to 263 (QQQQ…SHAQ). Phosphoserine is present on residues serine 325 and serine 328. The disordered stretch occupies residues 330–361 (LDGSDAGGKAFRKPRRRLKRKPSKTEETDEFS). Positions 339–351 (AFRKPRRRLKRKP) are enriched in basic residues. Residues 362–413 (NQRVMANVRERQRTQSLNDAFKSLQQIIPTLPSDKLSKIQTLKLATRYIDFL) enclose the bHLH domain.

As to quaternary structure, efficient DNA binding requires dimerization with another bHLH protein. Homodimer. Interacts with akirin. Expressed in embryonic abdomen; a single cell ventrally, pairs of cells laterally and three cells dorsally in each hemisegment. In the thorax, there are patches of cells associated with the imaginal disks. During larval development, cells proliferate and, in the abdomen, they form ventral, lateral and dorsal clusters, which are the precursors of the adult abdominal muscles. In the thorax, they form populations of cells in the imaginal disks that correspond to the adepithelial cells.

The protein localises to the nucleus. In terms of biological role, involved in the establishment and dorsoventral patterning of germ layers in the embryo. The sequence is that of Protein twist (twi) from Drosophila melanogaster (Fruit fly).